A 245-amino-acid polypeptide reads, in one-letter code: tRNA1(Val) (adenine(37)-N6)-methyltransferase (245 aa).

This sequence belongs to the methyltransferase superfamily. tRNA (adenine-N(6)-)-methyltransferase family.

The protein resides in the cytoplasm. It catalyses the reaction adenosine(37) in tRNA1(Val) + S-adenosyl-L-methionine = N(6)-methyladenosine(37) in tRNA1(Val) + S-adenosyl-L-homocysteine + H(+). Functionally, specifically methylates the adenine in position 37 of tRNA(1)(Val) (anticodon cmo5UAC). The chain is tRNA1(Val) (adenine(37)-N6)-methyltransferase from Shigella sonnei (strain Ss046).